A 100-amino-acid chain; its full sequence is Putative septation protein SpoVG (100 aa).

Belongs to the SpoVG family.

Functionally, could be involved in septation. This chain is Putative septation protein SpoVG, found in Clostridium novyi (strain NT).